Here is a 350-residue protein sequence, read N- to C-terminus: Guanine nucleotide-binding protein G(t) subunit alpha (350 aa).

Residues 1–21 (MGAGASAEEKHSRELEKKLKE) form a disordered region. A lipid anchor (N-myristoyl glycine) is attached at glycine 2. Residues 7–21 (AEEKHSRELEKKLKE) show a composition bias toward basic and acidic residues. Residues 28 to 350 (RTVKLLLLGA…KENLKDCGLF (323 aa)) enclose the G-alpha domain. Residues 31–44 (KLLLLGAGESGKST) form a G1 motif region. GTP contacts are provided by residues 36 to 43 (GAGESGKS), 171 to 177 (LRSRVKT), 196 to 200 (DVGGQ), 265 to 268 (NKKD), and alanine 322. Mg(2+) is bound by residues serine 43 and threonine 177. The G2 motif stretch occupies residues 169 to 177 (DVLRSRVKT). Positions 192–201 (FRMFDVGGQR) are G3 motif. Positions 261 to 268 (VLFLNKKD) are G4 motif. The interval 320 to 325 (TCATDT) is G5 motif.

Belongs to the G-alpha family. G(i/o/t/z) subfamily. In terms of assembly, g proteins are composed of 3 units; alpha, beta and gamma. The alpha chain contains the guanine nucleotide binding site.

Its function is as follows. Guanine nucleotide-binding proteins (G proteins) are involved as modulators or transducers in various transmembrane signaling systems. Transducin is an amplifier and one of the transducers of a visual impulse that performs the coupling between rhodopsin and cGMP-phosphodiesterase. The chain is Guanine nucleotide-binding protein G(t) subunit alpha (gnat) from Xenopus laevis (African clawed frog).